The primary structure comprises 433 residues: Trigger factor (433 aa).

The PPIase FKBP-type domain maps to Gly-165–Val-250.

Belongs to the FKBP-type PPIase family. Tig subfamily.

The protein resides in the cytoplasm. The enzyme catalyses [protein]-peptidylproline (omega=180) = [protein]-peptidylproline (omega=0). Involved in protein export. Acts as a chaperone by maintaining the newly synthesized protein in an open conformation. Functions as a peptidyl-prolyl cis-trans isomerase. In Sulfurimonas denitrificans (strain ATCC 33889 / DSM 1251) (Thiomicrospira denitrificans (strain ATCC 33889 / DSM 1251)), this protein is Trigger factor.